The primary structure comprises 125 residues: MSQSIEDYLERIYLFIKENNRPIKTTELAKLLNIKPSAVTNMAKKLHRLGYVNYEPYIGITLTEKGIEEAKKILDKHKTIKIFLVEFLGLDEKTASEEACKLEHALSDEILERLKIFMEKFKDKV.

The HTH dtxR-type domain maps to 1-63 (MSQSIEDYLE…YEPYIGITLT (63 aa)).

Belongs to the DtxR/MntR family.

This is an uncharacterized protein from Methanocaldococcus jannaschii (strain ATCC 43067 / DSM 2661 / JAL-1 / JCM 10045 / NBRC 100440) (Methanococcus jannaschii).